A 358-amino-acid polypeptide reads, in one-letter code: Cholesterol galactosyltransferase (358 aa).

This sequence belongs to the glycosyltransferase 2 family.

The enzyme catalyses cholesterol + UDP-alpha-D-galactose = cholesteryl 3-beta-D-galactoside + UDP + H(+). Its pathway is glycolipid biosynthesis. In terms of biological role, galactosyltransferase involved in the synthesis of cholesterol glycolipids, which are formed by the use of host-derived cholesterol and have been shown to be immunogenic, and possibly contribute to Lyme disease pathogenesis. Catalyzes the formation of cholesteryl beta-D-galactopyranoside (CGal) from cholesterol and UDP-alpha-D-galactose. Cannot use GDP-mannose. This chain is Cholesterol galactosyltransferase, found in Borreliella burgdorferi (strain ATCC 35210 / DSM 4680 / CIP 102532 / B31) (Borrelia burgdorferi).